A 306-amino-acid polypeptide reads, in one-letter code: Ornithine carbamoyltransferase 1, anabolic (306 aa).

Carbamoyl phosphate is bound by residues 53–56 (STRT), glutamine 80, arginine 104, and 131–134 (HPCQ). Residues asparagine 162, aspartate 219, and 223 to 224 (SM) each bind L-ornithine. Carbamoyl phosphate is bound by residues 259–260 (CL) and arginine 287.

This sequence belongs to the aspartate/ornithine carbamoyltransferase superfamily. OTCase family. In terms of assembly, homotrimer.

It is found in the cytoplasm. The enzyme catalyses carbamoyl phosphate + L-ornithine = L-citrulline + phosphate + H(+). It participates in amino-acid biosynthesis; L-arginine biosynthesis; L-arginine from L-ornithine and carbamoyl phosphate: step 1/3. Its activity is regulated as follows. Reversibly inhibited by inhibited by phaseolotoxin and octicidine. Functionally, reversibly catalyzes the transfer of the carbamoyl group from carbamoyl phosphate (CP) to the N(epsilon) atom of ornithine (ORN) to produce L-citrulline, which is a substrate for argininosuccinate synthetase, the enzyme involved in the final step in arginine biosynthesis. The chain is Ornithine carbamoyltransferase 1, anabolic from Pseudomonas savastanoi pv. phaseolicola (Pseudomonas syringae pv. phaseolicola).